Consider the following 69-residue polypeptide: uncharacterized protein (69 aa).

This is an uncharacterized protein from Escherichia coli O157:H7.